The chain runs to 20 residues: Collagenolytic protease 36 kDa C (20 aa).

A Peptidase S1 domain is found at 1–20 (IVGGSEATSGQFPYQXSFQD). The segment at 1 to 20 (IVGGSEATSGQFPYQXSFQD) is disordered.

Belongs to the peptidase S1 family.

The enzyme catalyses Hydrolysis of proteins, with broad specificity for peptide bonds. Native collagen is cleaved about 75% of the length of the molecule from the N-terminus. Low activity on small molecule substrates of both trypsin and chymotrypsin.. In terms of biological role, this enzyme is a serine protease capable of degrading the native triple helix of collagen. In Paralithodes camtschaticus (Red king crab), this protein is Collagenolytic protease 36 kDa C.